The chain runs to 202 residues: Large ribosomal subunit protein bL9 (202 aa).

The interval 176–202 (AAGEFFDPDAQHDDEPAAEDDQNAEEK) is disordered. Positions 191–202 (PAAEDDQNAEEK) are enriched in acidic residues.

It belongs to the bacterial ribosomal protein bL9 family.

Its function is as follows. Binds to the 23S rRNA. The protein is Large ribosomal subunit protein bL9 of Nitrobacter winogradskyi (strain ATCC 25391 / DSM 10237 / CIP 104748 / NCIMB 11846 / Nb-255).